The primary structure comprises 510 residues: GMP synthase [glutamine-hydrolyzing] (510 aa).

The region spanning 5 to 194 is the Glutamine amidotransferase type-1 domain; it reads DILVLDFGSQ…FAKICGCEST (190 aa). The Nucleophile role is filled by C82. Active-site residues include H169 and E171. The 191-residue stretch at 195–385 folds into the GMPS ATP-PPase domain; the sequence is WNMGSFAKKE…LGLSRDIVYR (191 aa). 222–228 is a binding site for ATP; it reads SGGVDSS.

Homodimer.

It carries out the reaction XMP + L-glutamine + ATP + H2O = GMP + L-glutamate + AMP + diphosphate + 2 H(+). Its pathway is purine metabolism; GMP biosynthesis; GMP from XMP (L-Gln route): step 1/1. Catalyzes the synthesis of GMP from XMP. This is GMP synthase [glutamine-hydrolyzing] from Campylobacter fetus subsp. fetus (strain 82-40).